We begin with the raw amino-acid sequence, 316 residues long: Phosphatidylglycerol--prolipoprotein diacylglyceryl transferase (316 aa).

3 helical membrane-spanning segments follow: residues P18 to L38, G47 to G67, and N95 to F115. R141 is an a 1,2-diacyl-sn-glycero-3-phospho-(1'-sn-glycerol) binding site. A run of 2 helical transmembrane segments spans residues V188–W208 and I251–K271. The tract at residues A292–R316 is disordered.

Belongs to the Lgt family.

The protein resides in the cell membrane. It catalyses the reaction L-cysteinyl-[prolipoprotein] + a 1,2-diacyl-sn-glycero-3-phospho-(1'-sn-glycerol) = an S-1,2-diacyl-sn-glyceryl-L-cysteinyl-[prolipoprotein] + sn-glycerol 1-phosphate + H(+). It participates in protein modification; lipoprotein biosynthesis (diacylglyceryl transfer). Its function is as follows. Catalyzes the transfer of the diacylglyceryl group from phosphatidylglycerol to the sulfhydryl group of the N-terminal cysteine of a prolipoprotein, the first step in the formation of mature lipoproteins. In Corynebacterium glutamicum (strain ATCC 13032 / DSM 20300 / JCM 1318 / BCRC 11384 / CCUG 27702 / LMG 3730 / NBRC 12168 / NCIMB 10025 / NRRL B-2784 / 534), this protein is Phosphatidylglycerol--prolipoprotein diacylglyceryl transferase.